Consider the following 283-residue polypeptide: Putative cytochrome b-c1 complex subunit Rieske-like protein 1 (283 aa).

A helical membrane pass occupies residues Thr-116–Met-149. Residues Glu-196–Ile-281 form the Rieske domain. [2Fe-2S] cluster-binding residues include Cys-226, His-228, Cys-245, and His-248. Cys-231 and Cys-247 are oxidised to a cystine.

This sequence belongs to the Rieske iron-sulfur protein family. The cofactor is [2Fe-2S] cluster.

It is found in the membrane. The sequence is that of Putative cytochrome b-c1 complex subunit Rieske-like protein 1 (UQCRFS1P1) from Homo sapiens (Human).